The chain runs to 327 residues: Glycerol-3-phosphate acyltransferase (327 aa).

The next 5 membrane-spanning stretches (helical) occupy residues 3 to 23, 52 to 72, 78 to 98, 112 to 132, and 152 to 172; these read SLLWLAVAYVMGSIPFGLLFA, VGVLTLVCDALKGAIPVAVAL, TVFHSLTALAALLGHLYSCFL, VFLPLAFWPLVLSGIACLAVI, and MLLLGGHWKLVPLALVVMVLV. Disordered regions lie at residues 184–212 and 233–327; these read SRGEEKPWQKKHHDAAQGTDAGAAPEAAA and PSTE…SSGQ. The segment covering 199–212 has biased composition (low complexity); the sequence is AQGTDAGAAPEAAA. Over residues 237–246 the composition is skewed to polar residues; it reads AAPSQETSDA. The span at 259 to 271 shows a compositional bias: basic and acidic residues; that stretch reads EGDKRENEEHDNA.

The protein belongs to the PlsY family. Probably interacts with PlsX.

It is found in the cell inner membrane. It carries out the reaction an acyl phosphate + sn-glycerol 3-phosphate = a 1-acyl-sn-glycero-3-phosphate + phosphate. It functions in the pathway lipid metabolism; phospholipid metabolism. In terms of biological role, catalyzes the transfer of an acyl group from acyl-phosphate (acyl-PO(4)) to glycerol-3-phosphate (G3P) to form lysophosphatidic acid (LPA). This enzyme utilizes acyl-phosphate as fatty acyl donor, but not acyl-CoA or acyl-ACP. This chain is Glycerol-3-phosphate acyltransferase, found in Nitratidesulfovibrio vulgaris (strain ATCC 29579 / DSM 644 / CCUG 34227 / NCIMB 8303 / VKM B-1760 / Hildenborough) (Desulfovibrio vulgaris).